The primary structure comprises 448 residues: Methylenetetrahydrofolate--tRNA-(uracil-5-)-methyltransferase TrmFO (448 aa).

13–18 (GAGLAG) is an FAD binding site.

Belongs to the MnmG family. TrmFO subfamily. FAD is required as a cofactor.

The protein localises to the cytoplasm. The catalysed reaction is uridine(54) in tRNA + (6R)-5,10-methylene-5,6,7,8-tetrahydrofolate + NADH + H(+) = 5-methyluridine(54) in tRNA + (6S)-5,6,7,8-tetrahydrofolate + NAD(+). It catalyses the reaction uridine(54) in tRNA + (6R)-5,10-methylene-5,6,7,8-tetrahydrofolate + NADPH + H(+) = 5-methyluridine(54) in tRNA + (6S)-5,6,7,8-tetrahydrofolate + NADP(+). Functionally, catalyzes the folate-dependent formation of 5-methyl-uridine at position 54 (M-5-U54) in all tRNAs. In Streptococcus pyogenes serotype M6 (strain ATCC BAA-946 / MGAS10394), this protein is Methylenetetrahydrofolate--tRNA-(uracil-5-)-methyltransferase TrmFO.